A 1101-amino-acid polypeptide reads, in one-letter code: MEEENAVEILQRYRRDRRKLLDFMLAGSLIKKVIMPPGAVTLDDVDLDQVSVDYVINCAKKGGMLELAEAIRDYHDHIGLPYMNSVGTADEFFLATIPESSGSPPKRAPPPIPVLISSSSPMVTNPEWCESPSAPPLMRSESFDSPKAQELTVDDIDDFEDDDDLDEVGNFRISRRTANDAADLVPRLPSFATGITDDDLRETAFEILLACAGASGGLIVPSKEKKKEKSRSRLIKKLGRKSESVSQSQSSSGLVSLLEMMRGQMEISEAMDIRTRQGLLNALAGKVGKRMDSLLVPLELLCCVSRTEFSDKKAYLRWQKRQLNMLAEGLINNPVVGFGESGRKATDLKSLLLRIEESESLPSSAGEVQRAECLKSLREVAISLAERPARGDLTGEVCHWADGYHLNVRLYEKLLLCVFDILNDGKLTEEVEEILELLKSTWRVLGITETIHYTCYAWVLFRQYVITSERGLLRHAIQQLKKIPLKEQRGPQERLHLKTLKCRVDNEEISFLESFLSPIRSWADKQLGDYHLHFAEGSLVMEDTVTVAMITWRLLLEESDRAMHSNSSDREQIESYVLSSIKNTFTRMSLAIDRSDRNNEHHLALLAEETKKLMKKDSTIFMPILSQRHPQAIAFSASLIHKLYGNKLKPFLDGAEHLTEDAVSVFPAADSLEQYLLELMTSVCGEDTSGPYFKKLIPYEVESLSGTLVLRWINSQLGRILSWVERAYKQEHWDPISPQQRYGSSIVEVFRIVEETVDQFFALKVPMRSIELSALFRGIDNAFQVYTNHVMEKLASKDDLVPPVPVLTRYKKETAIKVFVKKELFDSKHLDERRSINIDVPATAMLCVQLNTLHYAVSQLSKLEDSMWLRWIAKKPREKIVIRKSMVEKSKSFNQKESFEGSRKDINAALDRICEFTGTKIIFCDLREPFIENLYKPNVSQSRLEGLIEALDTELGQLCSVIMEPLRDRIVTSLLQASLDGLLRVLLDGGASRVFHPSESKLLEEDVEVLKEFFISGGDGLPRGVVENQVARVRLVVKLHGYETRELIDDLRSRSSLEMQQGGKGKLGADTQTLVRVLCHRNDSEASQFLKKQYKIPRSHG.

One can recognise an MHD1 domain in the interval 663–804; sequence VSVFPAADSL…ASKDDLVPPV (142 aa). An MHD2 domain is found at 941–1051; sequence QSRLEGLIEA…YETRELIDDL (111 aa).

Belongs to the unc-13 family. In terms of tissue distribution, expressed in roots, cotyledons, leaves, stems and flowers. Expressed in guard cells and mesophyll cells of leaves.

The protein localises to the cytoplasm. Its subcellular location is the cell membrane. In terms of biological role, controls the tethering of the proton ATPase AHA1 to the plasma membrane. Is essential for stomatal opening in response to low concentration of carbon dioxide and light. This Arabidopsis thaliana (Mouse-ear cress) protein is Protein unc-13 homolog.